We begin with the raw amino-acid sequence, 497 residues long: Glucose-6-phosphate isomerase (497 aa).

Glu-350 serves as the catalytic Proton donor. Residues His-381 and Lys-485 contribute to the active site.

Belongs to the GPI family.

It is found in the cytoplasm. It carries out the reaction alpha-D-glucose 6-phosphate = beta-D-fructose 6-phosphate. It functions in the pathway carbohydrate biosynthesis; gluconeogenesis. Its pathway is carbohydrate degradation; glycolysis; D-glyceraldehyde 3-phosphate and glycerone phosphate from D-glucose: step 2/4. Functionally, catalyzes the reversible isomerization of glucose-6-phosphate to fructose-6-phosphate. In Legionella pneumophila, this protein is Glucose-6-phosphate isomerase.